We begin with the raw amino-acid sequence, 382 residues long: Galactokinase (382 aa).

Substrate is bound at residue Glu-34–Asp-37. Gly-124 to Ser-130 contacts ATP. 2 residues coordinate Mg(2+): Ser-130 and Glu-162. Asp-174 functions as the Proton acceptor in the catalytic mechanism. Residue Tyr-223 coordinates substrate.

The protein belongs to the GHMP kinase family. GalK subfamily.

Its subcellular location is the cytoplasm. The enzyme catalyses alpha-D-galactose + ATP = alpha-D-galactose 1-phosphate + ADP + H(+). It participates in carbohydrate metabolism; galactose metabolism. In terms of biological role, catalyzes the transfer of the gamma-phosphate of ATP to D-galactose to form alpha-D-galactose-1-phosphate (Gal-1-P). The protein is Galactokinase of Escherichia coli O17:K52:H18 (strain UMN026 / ExPEC).